The chain runs to 977 residues: ELMO domain-containing protein A (977 aa).

One can recognise an ELMO domain in the interval glutamate 383–leucine 561. Low complexity-rich tracts occupy residues serine 792–glycine 838 and glutamine 852–serine 897. Positions serine 792–proline 899 are disordered.

As to quaternary structure, associates with mhcA.

Its function is as follows. Functions as a negative regulator of actin polymerization. Modulates actin/myosin II at cortex actinomyosins to prevent excessive F-actin polymerization around the cell periphery, thereby maintaining proper cell shape during phagocytosis and chemotaxis. This is ELMO domain-containing protein A (elmoA) from Dictyostelium discoideum (Social amoeba).